The following is a 217-amino-acid chain: Formate dehydrogenase, nitrate-inducible, cytochrome b556(Fdn) subunit (217 aa).

The Cytoplasmic segment spans residues 1–11; that stretch reads MSKSKMIVRTK. The helical transmembrane segment at 12–36 threads the bilayer; the sequence is FIDRACHWTVVICFFLVALSGISFF. A heme b-binding site is contributed by H18. Residues 37–52 are Periplasmic-facing; it reads FPTLQWLTQTFGTPQM. Residues 53–74 form a helical membrane-spanning segment; that stretch reads GRILHPFFGIAIFVALMFMFVR. Residue H57 coordinates heme b. Topologically, residues 75–110 are cytoplasmic; sequence FVHHNIPDKKDIPWLLNIVEVLKGNEHKVADVGKYN. A helical transmembrane segment spans residues 111 to 134; the sequence is AGQKMMFWSIMSMIFVLLVTGVII. Residues 135–150 lie on the Periplasmic side of the membrane; sequence WRPYFAQYFPMQVVRY. Residues 151–175 form a helical membrane-spanning segment; it reads SLLIHAAAGIILIHAILIHMYMAFW. H155 and H169 together coordinate heme b. H169 contacts a menaquinone. Residues 176-217 lie on the Cytoplasmic side of the membrane; that stretch reads VKGSIKGMIEGKVSRRWAKKHHPRWYREIEKAEAKKESEEGI.

This sequence belongs to the formate dehydrogenase gamma subunit family. In terms of assembly, trimer of heterotrimers, consisting of subunits alpha, beta and gamma. Heme is required as a cofactor.

It is found in the cell inner membrane. Formate dehydrogenase allows the bacterium to use formate as major electron donor during anaerobic respiration, when nitrate is used as electron acceptor. Subunit gamma is the cytochrome b556 component of the formate dehydrogenase-N, and also contains a menaquinone reduction site that receives electrons from the beta subunit (FdnH), through its hemes. Formate dehydrogenase-N is part of a system that generates proton motive force, together with the dissimilatory nitrate reductase (Nar). The chain is Formate dehydrogenase, nitrate-inducible, cytochrome b556(Fdn) subunit (fdnI) from Escherichia coli O157:H7.